A 443-amino-acid chain; its full sequence is Protein IQ-DOMAIN 11 (443 aa).

The interval 5-20 (KGLFTVLKRIFISEVN) is calmodulin-binding. 2 short sequence motifs (nuclear localization signal) span residues 11–18 (LKRIFISE) and 27–34 (RRKWTFWK). The tract at residues 44-65 (ITAPPEHRTSHESHEEQKEEIV) is disordered. The span at 48–64 (PEHRTSHESHEEQKEEI) shows a compositional bias: basic and acidic residues. 2 IQ domains span residues 113 to 138 (AATR…GIVK) and 139 to 161 (LQAY…CLQS). The span at 277–293 (FSSKTKPKDETLNEKQL) shows a compositional bias: basic and acidic residues. Positions 277-361 (FSSKTKPKDE…PRSFDTQSES (85 aa)) are disordered.

This sequence belongs to the IQD family. Binds to multiple calmodulin (CaM) in the presence of Ca(2+) and CaM-like proteins. As to expression, expressed in hypocotyls, cotyledons, leaves and petioles.

Its subcellular location is the nucleus. The protein localises to the cytoplasm. The protein resides in the cytoskeleton. Functionally, may be involved in cooperative interactions with calmodulins or calmodulin-like proteins. Recruits calmodulin proteins to microtubules, thus being a potential scaffold in cellular signaling and trafficking. Regulates cell shape and elongation in aerial organs (i.e. epidermis pavement cells) probably by regulating cortical microtubules (MT) arrays orientation. May associate with nucleic acids and regulate gene expression at the transcriptional or post-transcriptional level. The polypeptide is Protein IQ-DOMAIN 11 (Arabidopsis thaliana (Mouse-ear cress)).